Reading from the N-terminus, the 180-residue chain is Nucleoside-triphosphatase THEP1 (180 aa).

ATP is bound by residues glycine 9–threonine 16 and valine 99–glycine 106.

It belongs to the THEP1 NTPase family.

The catalysed reaction is a ribonucleoside 5'-triphosphate + H2O = a ribonucleoside 5'-diphosphate + phosphate + H(+). Its function is as follows. Has nucleotide phosphatase activity towards ATP, GTP, CTP, TTP and UTP. May hydrolyze nucleoside diphosphates with lower efficiency. The chain is Nucleoside-triphosphatase THEP1 from Methanopyrus kandleri (strain AV19 / DSM 6324 / JCM 9639 / NBRC 100938).